We begin with the raw amino-acid sequence, 154 residues long: Troponin C, isoallergen Bla g 6.0301 (154 aa).

EF-hand domains lie at 11-46 (EQIS…MGQP), 47-82 (FNRR…FIIE), 87-122 (AMEK…LDEQ), and 123-154 (LTSD…MMTG). Residues Asp-60, Asp-62, Ser-64, Arg-66, and Glu-71 each coordinate Ca(2+). Ca(2+) is bound by residues Asp-136, Asp-138, Ser-140, Thr-142, and Glu-147.

It belongs to the troponin C family.

In terms of biological role, troponin is the central regulatory protein of striated muscle contraction. It consists of three components: Troponin-I (Tn-I) which is the inhibitor of actomyosin ATPase, Troponin-T (Tn-T) which contains the binding site for tropomyosin and Troponin-C (Tn-C). The binding of calcium to Tn-C abolishes the inhibitory action of Tn on actin filaments. The polypeptide is Troponin C, isoallergen Bla g 6.0301 (Blattella germanica (German cockroach)).